The primary structure comprises 210 residues: Protein LURP-one-related 5 (210 aa).

It belongs to the LOR family.

Might be related to the phospholipid scramblase and tubby-like superfamily of membrane tethered transcription factors. The sequence is that of Protein LURP-one-related 5 from Arabidopsis thaliana (Mouse-ear cress).